Reading from the N-terminus, the 347-residue chain is tRNA N6-adenosine threonylcarbamoyltransferase (347 aa).

The Fe cation site is built by H115 and H119. Substrate contacts are provided by residues L138–G142, D171, G184, and N277. D305 contributes to the Fe cation binding site.

Belongs to the KAE1 / TsaD family. It depends on Fe(2+) as a cofactor.

It is found in the cytoplasm. The enzyme catalyses L-threonylcarbamoyladenylate + adenosine(37) in tRNA = N(6)-L-threonylcarbamoyladenosine(37) in tRNA + AMP + H(+). In terms of biological role, required for the formation of a threonylcarbamoyl group on adenosine at position 37 (t(6)A37) in tRNAs that read codons beginning with adenine. Is involved in the transfer of the threonylcarbamoyl moiety of threonylcarbamoyl-AMP (TC-AMP) to the N6 group of A37, together with TsaE and TsaB. TsaD likely plays a direct catalytic role in this reaction. In Polaromonas sp. (strain JS666 / ATCC BAA-500), this protein is tRNA N6-adenosine threonylcarbamoyltransferase.